An 89-amino-acid polypeptide reads, in one-letter code: Small ribosomal subunit protein uS15 (89 aa).

The disordered stretch occupies residues 1–25 (MSLSAEQKGEIVKKHARTASDTGSP).

This sequence belongs to the universal ribosomal protein uS15 family. As to quaternary structure, part of the 30S ribosomal subunit. Forms a bridge to the 50S subunit in the 70S ribosome, contacting the 23S rRNA.

Functionally, one of the primary rRNA binding proteins, it binds directly to 16S rRNA where it helps nucleate assembly of the platform of the 30S subunit by binding and bridging several RNA helices of the 16S rRNA. Forms an intersubunit bridge (bridge B4) with the 23S rRNA of the 50S subunit in the ribosome. The chain is Small ribosomal subunit protein uS15 from Alkalilimnicola ehrlichii (strain ATCC BAA-1101 / DSM 17681 / MLHE-1).